Here is a 261-residue protein sequence, read N- to C-terminus: MARGPKKHLKRLNAPKAWMLDKLGGVYAPRPSTGPHKLRESLPLVIFLRNRLKYALTNSEVTKIVMQRLIKVDGKVRTDPNYPSGFMDVITIEKTGEFFRLIYDVKGRFTIHRITAEEAKYKLCKVKRVQTGPKGIPFLVTHDGRTIRYPDPIIKVNDTIQLEIANSKIMDSIKFDSGNLCMITGGRNLGRVGTVVNRERHPGSFDIVHIKDSQGHTFANRLNNVFIIGKGSKAYVSLPRGKGVKLSIAEERDKRLAAKTH.

Positions 42-104 (LPLVIFLRNR…TGEFFRLIYD (63 aa)) constitute an S4 RNA-binding domain.

It belongs to the eukaryotic ribosomal protein eS4 family.

The chain is Small ribosomal subunit protein eS4 (RpS4) from Carabus granulatus (Ground beetle).